The primary structure comprises 158 residues: Rhombotin-2 (158 aa).

2 consecutive LIM zinc-binding domains span residues leucine 28–glutamine 90 and glycine 92–leucine 154.

Expression becomes restricted to the ventral blood island (VBI) as the embryo develops. In late neurula and early tailbud embryos, also expressed in the dorsal lateral plate (DLP), the site of definitive hematopoiesis in the tadpole. Expression in the DLP diminishes during tailbud stages. Expressed in circulating blood cells of tadpoles. Also expressed in non-hematopoietic sites, including the tailbud region and the central nervous system of early neurula embryos.

It is found in the nucleus. Transcription factor that acts synergistically with tal1/scl and gata1 to specify embryonic dorsal mesoderm to a hematopoietic fate. Induces globin gene expression together with fgf. In Xenopus laevis (African clawed frog), this protein is Rhombotin-2.